An 87-amino-acid chain; its full sequence is Cell division protein FtsL (87 aa).

The Cytoplasmic segment spans residues 1–6 (MNKSNF). A helical membrane pass occupies residues 7–23 (FLLLAVCVSAFSVVMQQ). At 24–87 (NQYRLNFTAL…GNTFMVEHQR (64 aa)) the chain is on the periplasmic side. A coiled-coil region spans residues 31–71 (TALDKAKKQEIALEQDYAQMRLQQARLANHEAIRAAAEKQN). Positions 68 to 87 (EKQNLHPPVSGNTFMVEHQR) are disordered.

This sequence belongs to the FtsL family. As to quaternary structure, part of a complex composed of FtsB, FtsL and FtsQ.

The protein resides in the cell inner membrane. Essential cell division protein. May link together the upstream cell division proteins, which are predominantly cytoplasmic, with the downstream cell division proteins, which are predominantly periplasmic. This Neisseria gonorrhoeae (strain ATCC 700825 / FA 1090) protein is Cell division protein FtsL.